The sequence spans 641 residues: Isomalto-dextranase (641 aa).

Residues 1–39 constitute a signal peptide (tat-type signal); sequence MMNLSRRTLLTTGSAATLAYALGMAGSAQAATAVTARPG. D227 serves as the catalytic Nucleophile. The active-site Proton donor is D288. The region spanning 500 to 640 is the CBM6 domain; it reads TRYPAAFAAW…AINLNWIELD (141 aa). Residues 556-588 are disordered; that stretch reads SGYRYANATDDNTTSKTTTKKANPEKADRSTVD. Low complexity predominate over residues 561–576; the sequence is ANATDDNTTSKTTTKK. Residues 577-586 show a composition bias toward basic and acidic residues; sequence ANPEKADRST.

It belongs to the glycosyl hydrolase 27 family. Predicted to be exported by the Tat system. The position of the signal peptide cleavage has been experimentally proven.

The protein resides in the secreted. The catalysed reaction is Hydrolysis of (1-&gt;6)-alpha-D-glucosidic linkages in polysaccharides, to remove successive isomaltose units from the non-reducing ends of the chains.. The sequence is that of Isomalto-dextranase (imd) from Arthrobacter globiformis.